The chain runs to 445 residues: Argininosuccinate synthase (445 aa).

ATP-binding positions include 17–25 (AFSGGLDTS) and Ala43. An L-citrulline-binding site is contributed by Tyr99. Residues Gly129 and Thr131 each contribute to the ATP site. Residues Thr131, Asn135, and Asp136 each coordinate L-aspartate. Residue Asn135 coordinates L-citrulline. Asp136 is an ATP binding site. L-citrulline-binding residues include Arg139 and Ser192. Asp194 is an ATP binding site. 3 residues coordinate L-citrulline: Thr201, Glu203, and Glu280.

The protein belongs to the argininosuccinate synthase family. Type 2 subfamily. As to quaternary structure, homotetramer.

The protein resides in the cytoplasm. It carries out the reaction L-citrulline + L-aspartate + ATP = 2-(N(omega)-L-arginino)succinate + AMP + diphosphate + H(+). The protein operates within amino-acid biosynthesis; L-arginine biosynthesis; L-arginine from L-ornithine and carbamoyl phosphate: step 2/3. In Burkholderia ambifaria (strain ATCC BAA-244 / DSM 16087 / CCUG 44356 / LMG 19182 / AMMD) (Burkholderia cepacia (strain AMMD)), this protein is Argininosuccinate synthase.